The chain runs to 166 residues: uncharacterized protein (166 aa).

3 4Fe-4S ferredoxin-type domains span residues 44-73, 75-104, and 139-166; these read AREDLFSAVCNGCGECASACPNGLIQLKQQ, ATLEIDYAPCDLCGKCAEVCPTNALHPNFP, and STLEIDNERCNGCGECKITCFVAAITLK. Cys-53, Cys-56, Cys-59, Cys-63, Cys-84, Cys-87, Cys-90, and Cys-94 together coordinate [4Fe-4S] cluster.

This is an uncharacterized protein from Haemophilus influenzae (strain ATCC 51907 / DSM 11121 / KW20 / Rd).